Here is an 842-residue protein sequence, read N- to C-terminus: ATP-binding cassette sub-family B member 6 (842 aa).

Over 1–26 the chain is Lumenal; the sequence is MVTVGNYCEAEGPVGPAWMQDGLSPC. The segment at 1–205 is required for the lysosomal targeting; sequence MVTVGNYCEA…SGGLFVLGLW (205 aa). Residues 1-236 form a required for ATPase activity region; sequence MVTVGNYCEA…RSQVRSAAQQ (236 aa). N-linked (GlcNAc...) asparagine glycosylation occurs at asparagine 6. A disulfide bridge connects residues cysteine 8 and cysteine 26. Residues 27-47 traverse the membrane as a helical segment; the sequence is FFFTLVPSTRMALGTLALVLA. Topologically, residues 48–72 are cytoplasmic; sequence LPCRRRERPAGADSLSWGAGPRISP. The helical transmembrane segment at 73 to 93 threads the bilayer; the sequence is YVLQLLLATLQAALPLAGLAG. Topologically, residues 94-106 are lumenal; that stretch reads RVGTARGAPLPSY. The chain crosses the membrane as a helical span at residues 107 to 127; it reads LLLASVLESLAGACGLWLLVV. The Cytoplasmic portion of the chain corresponds to 128–147; sequence ERSQARQRLAMGIWIKFRHS. The helical transmembrane segment at 148-168 threads the bilayer; that stretch reads PGLLLLWTVAFAAENLALVSW. Topologically, residues 169-185 are lumenal; it reads NSPQWWWARADLGQQVQ. The chain crosses the membrane as a helical span at residues 186–206; the sequence is FSLWVLRYVVSGGLFVLGLWA. The Cytoplasmic segment spans residues 207 to 263; that stretch reads PGLRPQSYTLQVHEEDQDVERSQVRSAAQQSTWRDFGRKLRLLSGYLWPRGSPALQL. A helical membrane pass occupies residues 264–284; it reads VVLICLGLMGLERALNVLVPI. The ABC transmembrane type-1 domain maps to 265–556; sequence VLICLGLMGL…FGTYYRMIQT (292 aa). Residues 285–291 lie on the Lumenal side of the membrane; sequence FYRNIVN. Residues 292-312 traverse the membrane as a helical segment; the sequence is LLTEKAPWNSLAWTVTSYVFL. Over 313–375 the chain is Cytoplasmic; sequence KFLQGGGTGS…TGEVLRIADR (63 aa). The helical transmembrane segment at 376–396 threads the bilayer; it reads GTSSVTGLLSYLVFNVIPTLA. Aspartate 397 is a topological domain (lumenal). Residues 398-418 form a helical membrane-spanning segment; that stretch reads IIIGIIYFSMFFNAWFGLIVF. At 419-499 the chain is on the cytoplasmic side; sequence LCMSLYLTLT…SSASLVLLNQ (81 aa). A helical transmembrane segment spans residues 500 to 520; sequence TQNLVIGLGLLAGSLLCAYFV. Residues 521–529 lie on the Lumenal side of the membrane; the sequence is TEQKLQVGD. The chain crosses the membrane as a helical span at residues 530–550; that stretch reads YVLFGTYIIQLYMPLNWFGTY. Topologically, residues 551-842 are cytoplasmic; that stretch reads YRMIQTNFID…EDTKPQTMER (292 aa). The region spanning 590–824 is the ABC transporter domain; the sequence is IEFENVHFSY…GGVYADMWQL (235 aa). ATP is bound by residues tyrosine 599 and 623–634; that span reads GPSGAGKSTILR.

It belongs to the ABC transporter superfamily. ABCB family. Heavy Metal importer (TC 3.A.1.210) subfamily. As to quaternary structure, homodimer. N-glycosylated. As to expression, widely expressed. High expression is detected in the retinal epithelium. Expressed in mature erythrocytes.

The protein resides in the cell membrane. It is found in the mitochondrion outer membrane. It localises to the endoplasmic reticulum membrane. Its subcellular location is the golgi apparatus membrane. The protein localises to the endosome membrane. The protein resides in the lysosome membrane. It is found in the late endosome membrane. It localises to the early endosome membrane. Its subcellular location is the secreted. The protein localises to the extracellular exosome. The protein resides in the mitochondrion. It is found in the endosome. It localises to the multivesicular body membrane. Its subcellular location is the melanosome membrane. The enzyme catalyses heme b(in) + ATP + H2O = heme b(out) + ADP + phosphate + H(+). It catalyses the reaction coproporphyrin III(in) + ATP + H2O = coproporphyrin III(out) + ADP + phosphate + H(+). The catalysed reaction is pheophorbide a(in) + ATP + H2O = pheophorbide a(out) + ADP + phosphate + H(+). It carries out the reaction coproporphyrinogen III(in) + ATP + H2O = coproporphyrinogen III(out) + ADP + phosphate + H(+). The enzyme catalyses protoporphyrin IX(in) + ATP + H2O = protoporphyrin IX(out) + ADP + phosphate + H(+). It catalyses the reaction coproporphyrin I(in) + ATP + H2O = coproporphyrin I(out) + ADP + phosphate + H(+). The catalysed reaction is uroporphyrin I(in) + ATP + H2O = uroporphyrin I(out) + ADP + phosphate + H(+). It carries out the reaction uroporphyrin III(in) + ATP + H2O = uroporphyrin III(out) + ADP + phosphate + H(+). Its activity is regulated as follows. ATPase activity is inhibited by MgATP with an IC(50) of 1.03 mM and up-regulated by coporphyrin III&gt; hemin &gt; protoporphyrin IX. ATPase activity for hemin is up-regulated by glutathione. The ATPase activity is impaired by increasing copper concentrations (0-300 uM). The ATPase activity is stimulated in presence of glutathione for increasing copper concentrations (0-300 uM). Its function is as follows. ATP-dependent transporter that catalyzes the transport of a broad-spectrum of porphyrins from the cytoplasm to the extracellular space through the plasma membrane or into the vesicle lumen. May also function as an ATP-dependent importer of porphyrins from the cytoplasm into the mitochondria, in turn may participate in the de novo heme biosynthesis regulation and in the coordination of heme and iron homeostasis during phenylhydrazine stress. May also play a key role in the early steps of melanogenesis producing PMEL amyloid fibrils. In vitro, it confers to cells a resistance to toxic metal such as arsenic and cadmium and against chemotherapeutics agent such as 5-fluorouracil, SN-38 and vincristin. In addition may play a role in the transition metal homeostasis. The polypeptide is ATP-binding cassette sub-family B member 6 (Homo sapiens (Human)).